Consider the following 415-residue polypeptide: Methylthioribose-1-phosphate isomerase (415 aa).

Aspartate 284 acts as the Proton donor in catalysis.

Belongs to the eIF-2B alpha/beta/delta subunits family. MtnA subfamily.

It localises to the cytoplasm. It is found in the nucleus. The catalysed reaction is 5-(methylsulfanyl)-alpha-D-ribose 1-phosphate = 5-(methylsulfanyl)-D-ribulose 1-phosphate. It functions in the pathway amino-acid biosynthesis; L-methionine biosynthesis via salvage pathway; L-methionine from S-methyl-5-thio-alpha-D-ribose 1-phosphate: step 1/6. Its function is as follows. Catalyzes the interconversion of methylthioribose-1-phosphate (MTR-1-P) into methylthioribulose-1-phosphate (MTRu-1-P). In Candida glabrata (strain ATCC 2001 / BCRC 20586 / JCM 3761 / NBRC 0622 / NRRL Y-65 / CBS 138) (Yeast), this protein is Methylthioribose-1-phosphate isomerase.